The primary structure comprises 72 residues: UPF0270 protein KPN78578_37030 (72 aa).

Belongs to the UPF0270 family.

This chain is UPF0270 protein KPN78578_37030, found in Klebsiella pneumoniae subsp. pneumoniae (strain ATCC 700721 / MGH 78578).